The following is a 130-amino-acid chain: Small ribosomal subunit protein uS9 (130 aa).

This sequence belongs to the universal ribosomal protein uS9 family.

The sequence is that of Small ribosomal subunit protein uS9 from Carboxydothermus hydrogenoformans (strain ATCC BAA-161 / DSM 6008 / Z-2901).